The sequence spans 51 residues: Ribosomal protein eL39-like 2 (51 aa).

Belongs to the eukaryotic ribosomal protein eL39 family. In terms of assembly, component of a male germ cell-specific 60S large ribosomal subunit (LSU), which contains RPL10L and RPL39L, instead of RPL10 and RPL39 paralogs. The composition of the rest of the complex is similar to classical ribosomes. In terms of tissue distribution, testis specific.

The protein localises to the cytoplasm. Functionally, male germ cell-specific component of the ribosome, which is required for the formation of sperm and male fertility. Replaces the RPL39 paralog in the ribosome of male germ cells. The ribosome is a large ribonucleoprotein complex responsible for the synthesis of proteins in the cell. The male germ cell-specific ribosome displays a ribosomal polypeptide exit tunnel of distinct size and charge states compared with the classical ribosome. It is responsible for regulating the biosynthesis and folding of a subset of male germ-cell-specific proteins that are essential for the formation of sperm. The protein is Ribosomal protein eL39-like 2 of Homo sapiens (Human).